A 106-amino-acid chain; its full sequence is Malonate decarboxylase acyl carrier protein (106 aa).

At S28 the chain carries O-(phosphoribosyl dephospho-coenzyme A)serine.

This sequence belongs to the MdcC family. Post-translationally, covalently binds the prosthetic group of malonate decarboxylase.

It is found in the cytoplasm. Functionally, subunit of malonate decarboxylase, it is an acyl carrier protein to which acetyl and malonyl thioester residues are bound via a 2'-(5''-phosphoribosyl)-3'-dephospho-CoA prosthetic group and turn over during the catalytic mechanism. This Stenotrophomonas maltophilia (strain K279a) protein is Malonate decarboxylase acyl carrier protein.